The sequence spans 637 residues: MKKLQEAHLRKPITPDLLMTPSDQGDVDLDVDFAADRGNWTGKLDFLLSCIGYCVGLGNVWRFPYRAYTNGGGAFLVPYFLMLAICGIPLFFLELSLGQFSSLGPLAVWKISPLFKGAGAAMLLIVGLVAIYYNMIIAYVLFYLFASLTSNLPWEHCGNWWNTELCLEHRGPKSGNGVLPLNLSSTVSPSEEYWSRYVLHIQGSQGIGRPGEIRWNLCLCLLLAWVIVFLCILKGVKSSGKVVYFTATFPYLILLMLLVRGVTLPGAWKGIQFYLTPQFHHLLSSKVWIEAALQIFYSLGVGFGGLLTFASYNTFHQNIYRDTFIVTLGNAITSILAGFAIFSVLGYMSQELGVPVDQVAKAGPGLAFVVYPQAMTMLPLSPFWSFLFFFMLLTLGLDSQFAFLETIVTAVTDEFPYYLRPKKAVFSGLICVAMYLMGLILTTDGGMYWLVLLDDYSASFGLMVVVITTCLAVTRVYGIQRFCRDIHMMLGFKPGLYFRACWLFLSPATLLALLVYSIVKYQPSEYGSYRFPAWAELLGILMGLLSCLMIPAGMLVAVLREEGSLWERLQQASRPAMDWGPSLEENRTGMYVATLAGSQSPKPLMVHMRKYGGITSFENTAIEVDREIAEEEEESMM.

Topologically, residues 1–45 (MKKLQEAHLRKPITPDLLMTPSDQGDVDLDVDFAADRGNWTGKLD) are cytoplasmic. Threonine 20 is subject to Phosphothreonine. Serine 22 bears the Phosphoserine mark. Transmembrane regions (helical) follow at residues 46–66 (FLLS…FPYR), 74–93 (AFLV…LFFL), and 117–137 (GAGA…NMII). At 138–214 (AYVLFYLFAS…QGIGRPGEIR (77 aa)) the chain is on the extracellular side. Asparagine 182 is a glycosylation site (N-linked (GlcNAc...) asparagine). 9 consecutive transmembrane segments (helical) span residues 215–233 (WNLC…LCIL), 242–259 (VVYF…MLLV), 295–312 (IFYS…FASY), 324–345 (FIVT…FSVL), 378–397 (LPLS…TLGL), 425–443 (VFSG…ILTT), 459–479 (SFGL…VYGI), 500–519 (ACWL…YSIV), and 538–556 (LGIL…GMLV). Over 557–637 (AVLREEGSLW…IAEEEEESMM (81 aa)) the chain is Cytoplasmic. Phosphoserine is present on residues serine 573 and serine 582. The residue at position 588 (threonine 588) is a Phosphothreonine. Phosphotyrosine is present on tyrosine 591. Phosphoserine occurs at positions 598 and 600.

This sequence belongs to the sodium:neurotransmitter symporter (SNF) (TC 2.A.22) family. SLC6A7 subfamily.

It is found in the synaptic cell membrane. The enzyme catalyses L-proline(out) + chloride(out) + 2 Na(+)(out) = L-proline(in) + chloride(in) + 2 Na(+)(in). It catalyses the reaction L-pipecolate(out) + chloride(out) + 2 Na(+)(out) = L-pipecolate(in) + chloride(in) + 2 Na(+)(in). Functionally, brain specific sodium (and chloride)-dependent proline transporter. Terminates the action of proline by its high affinity sodium-dependent reuptake into presynaptic terminals. This Mus musculus (Mouse) protein is Sodium-dependent proline transporter.